The primary structure comprises 337 residues: tRNA N6-adenosine threonylcarbamoyltransferase (337 aa).

Residues His-114 and His-118 each contribute to the Fe cation site. Residues 136–140 (LVSGG), Asp-169, Gly-182, Asp-186, and Asn-275 contribute to the substrate site. Asp-301 contacts Fe cation.

This sequence belongs to the KAE1 / TsaD family. The cofactor is Fe(2+).

The protein localises to the cytoplasm. The catalysed reaction is L-threonylcarbamoyladenylate + adenosine(37) in tRNA = N(6)-L-threonylcarbamoyladenosine(37) in tRNA + AMP + H(+). Its function is as follows. Required for the formation of a threonylcarbamoyl group on adenosine at position 37 (t(6)A37) in tRNAs that read codons beginning with adenine. Is involved in the transfer of the threonylcarbamoyl moiety of threonylcarbamoyl-AMP (TC-AMP) to the N6 group of A37, together with TsaE and TsaB. TsaD likely plays a direct catalytic role in this reaction. In Streptococcus thermophilus (strain CNRZ 1066), this protein is tRNA N6-adenosine threonylcarbamoyltransferase.